The chain runs to 545 residues: Indole-3-pyruvate decarboxylase (545 aa).

Glutamate 48 is a thiamine diphosphate binding site. The segment at 382-460 (DCLFTAMDMI…VILFNNASWE (79 aa)) is thiamine pyrophosphate binding. Residues aspartate 429 and asparagine 456 each coordinate Mg(2+).

This sequence belongs to the TPP enzyme family. A metal cation is required as a cofactor. Requires thiamine diphosphate as cofactor.

It catalyses the reaction indole-3-pyruvate + H(+) = indole-3-acetaldehyde + CO2. It functions in the pathway plant hormone metabolism; auxin biosynthesis. This is Indole-3-pyruvate decarboxylase (ipdC) from Azospirillum brasilense.